Here is a 293-residue protein sequence, read N- to C-terminus: Glutamyl-Q tRNA(Asp) synthetase (293 aa).

Residues 9-13 (RFAPS) and glutamate 45 contribute to the L-glutamate site. A 'HIGH' region motif is present at residues 12 to 22 (PSPSGSLHFGS). Zn(2+)-binding residues include cysteine 101, cysteine 103, tyrosine 115, and cysteine 119. Residues tyrosine 172 and arginine 190 each coordinate L-glutamate. The short motif at 228–232 (KLSKQ) is the 'KMSKS' region element. Lysine 231 is an ATP binding site.

It belongs to the class-I aminoacyl-tRNA synthetase family. GluQ subfamily. Zn(2+) serves as cofactor.

Catalyzes the tRNA-independent activation of glutamate in presence of ATP and the subsequent transfer of glutamate onto a tRNA(Asp). Glutamate is transferred on the 2-amino-5-(4,5-dihydroxy-2-cyclopenten-1-yl) moiety of the queuosine in the wobble position of the QUC anticodon. This Shewanella frigidimarina (strain NCIMB 400) protein is Glutamyl-Q tRNA(Asp) synthetase.